The chain runs to 129 residues: Large ribosomal subunit protein bL20 (129 aa).

The segment covering 1–17 (MARVKRSVNAHKKRRSV) has biased composition (basic residues). The segment at 1-29 (MARVKRSVNAHKKRRSVLKASKGYRGQRS) is disordered.

Belongs to the bacterial ribosomal protein bL20 family.

Its function is as follows. Binds directly to 23S ribosomal RNA and is necessary for the in vitro assembly process of the 50S ribosomal subunit. It is not involved in the protein synthesizing functions of that subunit. The polypeptide is Large ribosomal subunit protein bL20 (Mycobacterium ulcerans (strain Agy99)).